The sequence spans 1136 residues: Myosin-binding protein C, fast-type (1136 aa).

Disordered stretches follow at residues 1–55 (MPEA…KKPD) and 151–177 (APRQ…DAGE). Basic and acidic residues predominate over residues 13–35 (KGKDAPKEAPAKQTPEEPPKEAP). Residues 46 to 149 (PTGIFLKKPD…CDSCSFNVDV (104 aa)) form the Ig-like C2-type 1 domain. Residues 163–174 (SFKRSGDGKSED) show a composition bias toward basic and acidic residues. Ig-like C2-type domains lie at 250–339 (SAAF…VKEP), 340–432 (PVLI…VEEK), 433–533 (QLEV…KQEP), and 534–633 (PKIH…VVDV). 2 consecutive Fibronectin type-III domains span residues 636–732 (PPEA…IAPT) and 734–829 (APQH…IREI). The 95-residue stretch at 833–927 (PKIRLPRHLR…ATIRIRVVEK (95 aa)) folds into the Ig-like C2-type 6 domain. The Fibronectin type-III 3 domain maps to 930–1025 (PAENVMVKEV…SKNTARILKT (96 aa)). An Ig-like C2-type 7 domain is found at 1043-1136 (PKFLTPLMDR…ECKLDVRVPQ (94 aa)).

This sequence belongs to the immunoglobulin superfamily. MyBP family.

Functionally, thick filament-associated protein located in the crossbridge region of vertebrate striated muscle a bands. In vitro it binds MHC, F-actin and native thin filaments, and modifies the activity of actin-activated myosin ATPase. It may modulate muscle contraction or may play a more structural role. The chain is Myosin-binding protein C, fast-type (Mybpc2) from Mus musculus (Mouse).